The following is a 191-amino-acid chain: Ferric nitrobindin-like protein (191 aa).

The short motif at 20–26 (GDWAGAG) is the GXWXGXG element.

The protein belongs to the nitrobindin family.

This chain is Ferric nitrobindin-like protein, found in Streptomyces coelicolor (strain ATCC BAA-471 / A3(2) / M145).